The chain runs to 97 residues: uncharacterized protein (97 aa).

This is an uncharacterized protein from Geobacillus stearothermophilus (Bacillus stearothermophilus).